The following is a 121-amino-acid chain: Phosphoribosyl-ATP pyrophosphatase (121 aa).

Belongs to the PRA-PH family.

It localises to the cytoplasm. It catalyses the reaction 1-(5-phospho-beta-D-ribosyl)-ATP + H2O = 1-(5-phospho-beta-D-ribosyl)-5'-AMP + diphosphate + H(+). Its pathway is amino-acid biosynthesis; L-histidine biosynthesis; L-histidine from 5-phospho-alpha-D-ribose 1-diphosphate: step 2/9. The protein is Phosphoribosyl-ATP pyrophosphatase of Burkholderia cenocepacia (strain HI2424).